A 158-amino-acid chain; its full sequence is SsrA-binding protein (158 aa).

The interval 131 to 158 (YDKRQTLRERQDKREADRAMSSHRRLGE) is disordered.

Belongs to the SmpB family.

The protein localises to the cytoplasm. Required for rescue of stalled ribosomes mediated by trans-translation. Binds to transfer-messenger RNA (tmRNA), required for stable association of tmRNA with ribosomes. tmRNA and SmpB together mimic tRNA shape, replacing the anticodon stem-loop with SmpB. tmRNA is encoded by the ssrA gene; the 2 termini fold to resemble tRNA(Ala) and it encodes a 'tag peptide', a short internal open reading frame. During trans-translation Ala-aminoacylated tmRNA acts like a tRNA, entering the A-site of stalled ribosomes, displacing the stalled mRNA. The ribosome then switches to translate the ORF on the tmRNA; the nascent peptide is terminated with the 'tag peptide' encoded by the tmRNA and targeted for degradation. The ribosome is freed to recommence translation, which seems to be the essential function of trans-translation. The polypeptide is SsrA-binding protein (Clavibacter michiganensis subsp. michiganensis (strain NCPPB 382)).